A 354-amino-acid polypeptide reads, in one-letter code: Histidinol-phosphate aminotransferase (354 aa).

N6-(pyridoxal phosphate)lysine is present on Lys215.

Belongs to the class-II pyridoxal-phosphate-dependent aminotransferase family. Histidinol-phosphate aminotransferase subfamily. In terms of assembly, homodimer. The cofactor is pyridoxal 5'-phosphate.

It carries out the reaction L-histidinol phosphate + 2-oxoglutarate = 3-(imidazol-4-yl)-2-oxopropyl phosphate + L-glutamate. The protein operates within amino-acid biosynthesis; L-histidine biosynthesis; L-histidine from 5-phospho-alpha-D-ribose 1-diphosphate: step 7/9. This chain is Histidinol-phosphate aminotransferase, found in Vesicomyosocius okutanii subsp. Calyptogena okutanii (strain HA).